We begin with the raw amino-acid sequence, 173 residues long: Photosystem I assembly protein Ycf3 (173 aa).

TPR repeat units follow at residues 36 to 69, 73 to 106, and 121 to 154; these read AFAY…EQGE, SYIL…NPRL, and GELS…APNN.

It belongs to the Ycf3 family.

It localises to the cellular thylakoid membrane. Functionally, essential for the assembly of the photosystem I (PSI) complex. May act as a chaperone-like factor to guide the assembly of the PSI subunits. The chain is Photosystem I assembly protein Ycf3 from Synechococcus sp. (strain JA-2-3B'a(2-13)) (Cyanobacteria bacterium Yellowstone B-Prime).